We begin with the raw amino-acid sequence, 274 residues long: Mitochondrial outer membrane protein porin 3 (274 aa).

Ser-76 is modified (phosphoserine).

The protein belongs to the eukaryotic mitochondrial porin (TC 1.B.8.1) family. In terms of assembly, interacts with KIN14F/KP1. Interacts with FBA6 and GAPC1. In terms of tissue distribution, expressed in leaf tips, anthers and stigma.

It is found in the cell membrane. The protein localises to the mitochondrion outer membrane. In terms of biological role, forms a channel through the mitochondrial outer membrane that allows diffusion of small hydrophilic molecules. The channel adopts an open conformation at low or zero membrane potential and a closed conformation at potentials above 30-40 mV. The open state has a weak anion selectivity whereas the closed state is cation-selective. This Arabidopsis thaliana (Mouse-ear cress) protein is Mitochondrial outer membrane protein porin 3 (VDAC3).